Reading from the N-terminus, the 69-residue chain is Large ribosomal subunit protein uL30 (69 aa).

It belongs to the universal ribosomal protein uL30 family. Part of the 50S ribosomal subunit.

The sequence is that of Large ribosomal subunit protein uL30 from Rhizobium etli (strain ATCC 51251 / DSM 11541 / JCM 21823 / NBRC 15573 / CFN 42).